Consider the following 332-residue polypeptide: Alanine racemase (332 aa).

Catalysis depends on K33, which acts as the Proton acceptor; specific for D-alanine. K33 carries the post-translational modification N6-(pyridoxal phosphate)lysine. Residue R115 participates in substrate binding. Y245 functions as the Proton acceptor; specific for L-alanine in the catalytic mechanism. Position 286 (M286) interacts with substrate.

Belongs to the alanine racemase family. Requires pyridoxal 5'-phosphate as cofactor.

The enzyme catalyses L-alanine = D-alanine. The protein operates within amino-acid biosynthesis; D-alanine biosynthesis; D-alanine from L-alanine: step 1/1. Its function is as follows. Catalyzes the interconversion of L-alanine and D-alanine. May also act on other amino acids. The protein is Alanine racemase (alr) of Nitratiruptor sp. (strain SB155-2).